Here is a 403-residue protein sequence, read N- to C-terminus: Odorant receptor 43b (403 aa).

Residues 1–49 (MFGHFKLVYPAPISEPIQSRDSNAYMMETLRNSGLNLKNDFGIGRKIWR) are Cytoplasmic-facing. Residues 50 to 70 (VFSFTYNMVILPVSFPINYVI) traverse the membrane as a helical segment. At 71-83 (HLAEFPPELLLQS) the chain is on the extracellular side. Residues 84–104 (LQLCLNTWCFALKFFTLIVYT) form a helical membrane-spanning segment. At 105–139 (HRLELANKHFDELDKYCVKPAEKRKVRDMVATITR) the chain is on the cytoplasmic side. Residues 140–160 (LYLTFVVVYVLYATSTLLDGL) traverse the membrane as a helical segment. The Extracellular segment spans residues 161–193 (LHHRVPYNTYYPFINWRVDRTQMYIQSFLEYFT). The helical transmembrane segment at 194 to 214 (VGYAIYVATATDSYPVIYVAA) threads the bilayer. Topologically, residues 215-271 (LRTHILLLKDRIIYLGDPSNEGSSDPSYMFKSLVDCIKAHRTMLNFCDAIQPIISGT) are cytoplasmic. Residues 272–292 (IFAQFIICGSILGIIMINMVL) form a helical membrane-spanning segment. Residues 293–299 (FADQSTR) lie on the Extracellular side of the membrane. A helical membrane pass occupies residues 300 to 320 (FGIVIYVMAVLLQTFPLCFYC). The Cytoplasmic segment spans residues 321–372 (NAIVDDCKELAHALFHSAWWVQDKRYQRTVIQFLQKLQQPMTFTAMNIFNIN). A helical membrane pass occupies residues 373–393 (LATNINVAKFAFTVYAIASGM). Topologically, residues 394–403 (NLDQKLSIKE) are extracellular.

The protein belongs to the insect chemoreceptor superfamily. Heteromeric odorant receptor channel (TC 1.A.69) family. Or2a subfamily. In terms of assembly, interacts with Orco. Complexes exist early in the endomembrane system in olfactory sensory neurons (OSNs), coupling these complexes to the conserved ciliary trafficking pathway. Expressed in 16 olfactory receptor neurons in a broad area across the antenna, including both anterior and posterior faces and in the maxillary palp. This expression pattern matches the distribution of the small sensilla basiconica. Expression in the antenna is observed late in antennal development at 93 hours APF.

Its subcellular location is the cell membrane. In terms of biological role, odorant receptor which mediates acceptance or avoidance behavior, depending on its substrates. The odorant receptor repertoire encodes a large collection of odor stimuli that vary widely in identity, intensity, and duration. May form a complex with Orco to form odorant-sensing units, providing sensitive and prolonged odorant signaling and calcium permeability. This Drosophila melanogaster (Fruit fly) protein is Odorant receptor 43b (Or43b).